We begin with the raw amino-acid sequence, 503 residues long: Probable Xaa-Pro aminopeptidase TSTA_094700 (503 aa).

Residues Asp-277, Asp-288, Glu-428, and Glu-467 each coordinate Mn(2+).

The protein belongs to the peptidase M24B family. Mn(2+) serves as cofactor.

It carries out the reaction Release of any N-terminal amino acid, including proline, that is linked to proline, even from a dipeptide or tripeptide.. Its function is as follows. Catalyzes the removal of a penultimate prolyl residue from the N-termini of peptides. In Talaromyces stipitatus (strain ATCC 10500 / CBS 375.48 / QM 6759 / NRRL 1006) (Penicillium stipitatum), this protein is Probable Xaa-Pro aminopeptidase TSTA_094700.